We begin with the raw amino-acid sequence, 172 residues long: Large ribosomal subunit protein uL10 (172 aa).

This sequence belongs to the universal ribosomal protein uL10 family. In terms of assembly, part of the ribosomal stalk of the 50S ribosomal subunit. The N-terminus interacts with L11 and the large rRNA to form the base of the stalk. The C-terminus forms an elongated spine to which L12 dimers bind in a sequential fashion forming a multimeric L10(L12)X complex.

Functionally, forms part of the ribosomal stalk, playing a central role in the interaction of the ribosome with GTP-bound translation factors. This chain is Large ribosomal subunit protein uL10, found in Caulobacter sp. (strain K31).